A 179-amino-acid chain; its full sequence is Large ribosomal subunit protein uL6 (179 aa).

It belongs to the universal ribosomal protein uL6 family. In terms of assembly, part of the 50S ribosomal subunit.

Its function is as follows. This protein binds to the 23S rRNA, and is important in its secondary structure. It is located near the subunit interface in the base of the L7/L12 stalk, and near the tRNA binding site of the peptidyltransferase center. The polypeptide is Large ribosomal subunit protein uL6 (Bifidobacterium longum subsp. infantis (strain ATCC 15697 / DSM 20088 / JCM 1222 / NCTC 11817 / S12)).